We begin with the raw amino-acid sequence, 435 residues long: Arginine biosynthesis bifunctional protein ArgJ, mitochondrial (435 aa).

Positions 179, 205, 216, 302, 430, and 435 each coordinate substrate. The active-site Nucleophile is Thr-216.

Belongs to the ArgJ family. In terms of assembly, heterodimer of an alpha and a beta chain. In terms of processing, the alpha and beta chains are autoproteolytically processed from a single precursor protein within the mitochondrion.

It is found in the mitochondrion matrix. The catalysed reaction is N(2)-acetyl-L-ornithine + L-glutamate = N-acetyl-L-glutamate + L-ornithine. The enzyme catalyses L-glutamate + acetyl-CoA = N-acetyl-L-glutamate + CoA + H(+). It functions in the pathway amino-acid biosynthesis; L-arginine biosynthesis; L-ornithine and N-acetyl-L-glutamate from L-glutamate and N(2)-acetyl-L-ornithine (cyclic): step 1/1. It participates in amino-acid biosynthesis; L-arginine biosynthesis; N(2)-acetyl-L-ornithine from L-glutamate: step 1/4. Functionally, catalyzes two activities which are involved in the cyclic version of arginine biosynthesis: the synthesis of acetylglutamate from glutamate and acetyl-CoA, and of ornithine by transacetylation between acetylornithine and glutamate. This Schizosaccharomyces japonicus (strain yFS275 / FY16936) (Fission yeast) protein is Arginine biosynthesis bifunctional protein ArgJ, mitochondrial.